The following is a 326-amino-acid chain: ATP synthase gamma chain (326 aa).

The protein belongs to the ATPase gamma chain family. In terms of assembly, F-type ATPases have 2 components, CF(1) - the catalytic core - and CF(0) - the membrane proton channel. CF(1) has five subunits: alpha(3), beta(3), gamma(1), delta(1), epsilon(1). CF(0) has three main subunits: a, b and c.

It is found in the cell membrane. Its function is as follows. Produces ATP from ADP in the presence of a proton gradient across the membrane. The gamma chain is believed to be important in regulating ATPase activity and the flow of protons through the CF(0) complex. The chain is ATP synthase gamma chain from Corynebacterium efficiens (strain DSM 44549 / YS-314 / AJ 12310 / JCM 11189 / NBRC 100395).